We begin with the raw amino-acid sequence, 297 residues long: Tyrosine recombinase XerC (297 aa).

The Core-binding (CB) domain occupies 1-83; that stretch reads MAILDEFDEH…AVKAFTAWAK (83 aa). Residues 104–291 enclose the Tyr recombinase domain; it reads TLPAVLRQDQ…AVSRLRVVHD (188 aa). Residues Arg148, Lys172, His243, Arg246, and His269 contribute to the active site. The active-site O-(3'-phospho-DNA)-tyrosine intermediate is Tyr278.

This sequence belongs to the 'phage' integrase family. XerC subfamily. As to quaternary structure, forms a cyclic heterotetrameric complex composed of two molecules of XerC and two molecules of XerD.

It is found in the cytoplasm. Site-specific tyrosine recombinase, which acts by catalyzing the cutting and rejoining of the recombining DNA molecules. The XerC-XerD complex is essential to convert dimers of the bacterial chromosome into monomers to permit their segregation at cell division. It also contributes to the segregational stability of plasmids. The polypeptide is Tyrosine recombinase XerC (Mycobacterium leprae (strain TN)).